The following is a 186-amino-acid chain: Ribosome-recycling factor (186 aa).

Residues 135 to 156 (DANDEVKKLQKDKAVSEDEGKK) form a disordered region.

This sequence belongs to the RRF family.

Its subcellular location is the cytoplasm. Its function is as follows. Responsible for the release of ribosomes from messenger RNA at the termination of protein biosynthesis. May increase the efficiency of translation by recycling ribosomes from one round of translation to another. This chain is Ribosome-recycling factor, found in Bdellovibrio bacteriovorus (strain ATCC 15356 / DSM 50701 / NCIMB 9529 / HD100).